We begin with the raw amino-acid sequence, 227 residues long: Cytochrome c oxidase subunit 2 (227 aa).

The Mitochondrial intermembrane segment spans residues 1-14 (MAYPLQLGFQDAVS). A helical transmembrane segment spans residues 15-45 (PIMEELLYFHDHTLMIVFLISSLVLYIITLM). Residues 46-59 (LTTKLTHTNTMNAQ) are Mitochondrial matrix-facing. A helical membrane pass occupies residues 60 to 87 (EVETVWTILPAIILILIALPSLRILYMM). Topologically, residues 88–227 (DEINNPSLTV…TFEKWTASLL (140 aa)) are mitochondrial intermembrane. Residues H161, C196, E198, C200, H204, and M207 each coordinate Cu cation. Mg(2+) is bound at residue E198.

This sequence belongs to the cytochrome c oxidase subunit 2 family. Component of the cytochrome c oxidase (complex IV, CIV), a multisubunit enzyme composed of 14 subunits. The complex is composed of a catalytic core of 3 subunits MT-CO1, MT-CO2 and MT-CO3, encoded in the mitochondrial DNA, and 11 supernumerary subunits COX4I, COX5A, COX5B, COX6A, COX6B, COX6C, COX7A, COX7B, COX7C, COX8 and NDUFA4, which are encoded in the nuclear genome. The complex exists as a monomer or a dimer and forms supercomplexes (SCs) in the inner mitochondrial membrane with NADH-ubiquinone oxidoreductase (complex I, CI) and ubiquinol-cytochrome c oxidoreductase (cytochrome b-c1 complex, complex III, CIII), resulting in different assemblies (supercomplex SCI(1)III(2)IV(1) and megacomplex MCI(2)III(2)IV(2)). Found in a complex with TMEM177, COA6, COX18, COX20, SCO1 and SCO2. Interacts with TMEM177 in a COX20-dependent manner. Interacts with COX20. Interacts with COX16. Cu cation is required as a cofactor.

The protein resides in the mitochondrion inner membrane. The enzyme catalyses 4 Fe(II)-[cytochrome c] + O2 + 8 H(+)(in) = 4 Fe(III)-[cytochrome c] + 2 H2O + 4 H(+)(out). Component of the cytochrome c oxidase, the last enzyme in the mitochondrial electron transport chain which drives oxidative phosphorylation. The respiratory chain contains 3 multisubunit complexes succinate dehydrogenase (complex II, CII), ubiquinol-cytochrome c oxidoreductase (cytochrome b-c1 complex, complex III, CIII) and cytochrome c oxidase (complex IV, CIV), that cooperate to transfer electrons derived from NADH and succinate to molecular oxygen, creating an electrochemical gradient over the inner membrane that drives transmembrane transport and the ATP synthase. Cytochrome c oxidase is the component of the respiratory chain that catalyzes the reduction of oxygen to water. Electrons originating from reduced cytochrome c in the intermembrane space (IMS) are transferred via the dinuclear copper A center (CU(A)) of subunit 2 and heme A of subunit 1 to the active site in subunit 1, a binuclear center (BNC) formed by heme A3 and copper B (CU(B)). The BNC reduces molecular oxygen to 2 water molecules using 4 electrons from cytochrome c in the IMS and 4 protons from the mitochondrial matrix. This chain is Cytochrome c oxidase subunit 2 (MT-CO2), found in Hippopotamus amphibius (Hippopotamus).